We begin with the raw amino-acid sequence, 247 residues long: DNA polymerase sliding clamp (247 aa).

The protein belongs to the PCNA family. In terms of assembly, homotrimer. The subunits circularize to form a toroid; DNA passes through its center. Replication factor C (RFC) is required to load the toroid on the DNA.

In terms of biological role, sliding clamp subunit that acts as a moving platform for DNA processing. Responsible for tethering the catalytic subunit of DNA polymerase and other proteins to DNA during high-speed replication. In Methanoculleus marisnigri (strain ATCC 35101 / DSM 1498 / JR1), this protein is DNA polymerase sliding clamp.